We begin with the raw amino-acid sequence, 287 residues long: Isopentenyl-diphosphate Delta-isomerase I (287 aa).

The 153-residue stretch at 105-257 (LLHRAFSVFL…GVKLSPWFRL (153 aa)) folds into the Nudix hydrolase domain. Residues C142 and Y207 contribute to the active site.

Belongs to the IPP isomerase type 1 family.

The catalysed reaction is isopentenyl diphosphate = dimethylallyl diphosphate. The protein operates within isoprenoid biosynthesis; dimethylallyl diphosphate biosynthesis; dimethylallyl diphosphate from isopentenyl diphosphate: step 1/1. It participates in porphyrin-containing compound metabolism; chlorophyll biosynthesis. In terms of biological role, catalyzes the 1,3-allylic rearrangement of the homoallylic substrate isopentenyl (IPP) to its highly electrophilic allylic isomer, dimethylallyl diphosphate (DMAPP). The chain is Isopentenyl-diphosphate Delta-isomerase I (IPI1) from Clarkia breweri (Fairy fans).